A 151-amino-acid polypeptide reads, in one-letter code: Arginine repressor (151 aa).

Belongs to the ArgR family.

It is found in the cytoplasm. It participates in amino-acid biosynthesis; L-arginine biosynthesis [regulation]. Regulates arginine biosynthesis genes. The protein is Arginine repressor of Clostridium novyi (strain NT).